Here is a 400-residue protein sequence, read N- to C-terminus: tRNA(Ile)-lysidine synthase (400 aa).

25-30 (SGGVDS) contacts ATP.

It belongs to the tRNA(Ile)-lysidine synthase family.

It localises to the cytoplasm. It carries out the reaction cytidine(34) in tRNA(Ile2) + L-lysine + ATP = lysidine(34) in tRNA(Ile2) + AMP + diphosphate + H(+). Functionally, ligates lysine onto the cytidine present at position 34 of the AUA codon-specific tRNA(Ile) that contains the anticodon CAU, in an ATP-dependent manner. Cytidine is converted to lysidine, thus changing the amino acid specificity of the tRNA from methionine to isoleucine. This is tRNA(Ile)-lysidine synthase from Francisella philomiragia subsp. philomiragia (strain ATCC 25017 / CCUG 19701 / FSC 153 / O#319-036).